A 142-amino-acid chain; its full sequence is Large ribosomal subunit protein uL11 (142 aa).

This sequence belongs to the universal ribosomal protein uL11 family. As to quaternary structure, part of the ribosomal stalk of the 50S ribosomal subunit. Interacts with L10 and the large rRNA to form the base of the stalk. L10 forms an elongated spine to which L12 dimers bind in a sequential fashion forming a multimeric L10(L12)X complex. Post-translationally, one or more lysine residues are methylated.

Functionally, forms part of the ribosomal stalk which helps the ribosome interact with GTP-bound translation factors. The protein is Large ribosomal subunit protein uL11 of Acinetobacter baylyi (strain ATCC 33305 / BD413 / ADP1).